A 413-amino-acid polypeptide reads, in one-letter code: Glycosyl hydrolase family 109 protein 2 (413 aa).

NAD(+)-binding positions include 26 to 27 (NR), D48, 96 to 99 (WLTH), 116 to 117 (EV), and N145. Y174 serves as a coordination point for substrate. NAD(+) contacts are provided by residues 191 to 195 (YHNHW) and Y208. Substrate is bound by residues 208–211 (YPTH) and Y290.

The protein belongs to the Gfo/Idh/MocA family. Glycosyl hydrolase 109 subfamily. Requires NAD(+) as cofactor.

Its function is as follows. Glycosidase. The sequence is that of Glycosyl hydrolase family 109 protein 2 from Phocaeicola vulgatus (strain ATCC 8482 / DSM 1447 / JCM 5826 / CCUG 4940 / NBRC 14291 / NCTC 11154) (Bacteroides vulgatus).